The sequence spans 287 residues: ATP synthase gamma chain (287 aa).

Belongs to the ATPase gamma chain family. As to quaternary structure, F-type ATPases have 2 components, CF(1) - the catalytic core - and CF(0) - the membrane proton channel. CF(1) has five subunits: alpha(3), beta(3), gamma(1), delta(1), epsilon(1). CF(0) has three main subunits: a, b and c.

The protein localises to the cell membrane. In terms of biological role, produces ATP from ADP in the presence of a proton gradient across the membrane. The gamma chain is believed to be important in regulating ATPase activity and the flow of protons through the CF(0) complex. The chain is ATP synthase gamma chain from Bacillus caldotenax.